The sequence spans 404 residues: Pectate lyase E (404 aa).

Positions 1–41 (MNNSRMSSVSTQKTTGRSALGTKSALAAIIATTMMVSVASA) are cleaved as a signal peptide. Asp-182 and Asp-225 together coordinate Ca(2+). Residue Arg-278 is part of the active site.

The protein belongs to the polysaccharide lyase 1 family. PLBC subfamily. Ca(2+) serves as cofactor.

Its subcellular location is the secreted. It catalyses the reaction Eliminative cleavage of (1-&gt;4)-alpha-D-galacturonan to give oligosaccharides with 4-deoxy-alpha-D-galact-4-enuronosyl groups at their non-reducing ends.. The protein operates within glycan metabolism; pectin degradation; 2-dehydro-3-deoxy-D-gluconate from pectin: step 2/5. Its function is as follows. Involved in maceration and soft-rotting of plant tissue. Pectate lyases have been implicated as pathogenicity factors which induce maceration or rotting of plant tissue. PelE is sufficient to induce these effects under laboratory conditions. The sequence is that of Pectate lyase E (pelE) from Dickeya chrysanthemi (Pectobacterium chrysanthemi).